Consider the following 106-residue polypeptide: MAPFIPGELLPEPGEIELNAGRPVTSLHVANSGDRPVQVGSHFHFAEANAALQFDRTAARGQRLDIPAGTAIRFEPGDSRDVNLIPFAGDRRVIGFNGQINGPLDA.

This sequence belongs to the urease beta subunit family. As to quaternary structure, heterotrimer of UreA (gamma), UreB (beta) and UreC (alpha) subunits. Three heterotrimers associate to form the active enzyme.

Its subcellular location is the cytoplasm. The catalysed reaction is urea + 2 H2O + H(+) = hydrogencarbonate + 2 NH4(+). Its pathway is nitrogen metabolism; urea degradation; CO(2) and NH(3) from urea (urease route): step 1/1. The protein is Urease subunit beta of Synechococcus sp. (strain WH7805).